The following is a 240-amino-acid chain: Flagellar L-ring protein (240 aa).

An N-terminal signal peptide occupies residues 1–20; it reads MIRNFLLFFMPIYAILFLSG. Cys-21 carries N-palmitoyl cysteine lipidation. Residue Cys-21 is the site of S-diacylglycerol cysteine attachment.

This sequence belongs to the FlgH family. In terms of assembly, the basal body constitutes a major portion of the flagellar organelle and consists of four rings (L,P,S, and M) mounted on a central rod.

The protein localises to the cell outer membrane. The protein resides in the bacterial flagellum basal body. In terms of biological role, assembles around the rod to form the L-ring and probably protects the motor/basal body from shearing forces during rotation. The sequence is that of Flagellar L-ring protein from Sulfurimonas denitrificans (strain ATCC 33889 / DSM 1251) (Thiomicrospira denitrificans (strain ATCC 33889 / DSM 1251)).